Consider the following 334-residue polypeptide: Geranylgeranyl pyrophosphate synthase idtG (334 aa).

Isopentenyl diphosphate contacts are provided by Lys-49, Arg-52, and His-81. Mg(2+) is bound by residues Asp-88 and Asp-92. Arg-97 contributes to the dimethylallyl diphosphate binding site. Arg-98 contributes to the isopentenyl diphosphate binding site. Dimethylallyl diphosphate contacts are provided by Lys-175, Thr-176, and Gln-209. Position 212 (Asp-212) interacts with Mg(2+). Positions 216, 226, and 236 each coordinate dimethylallyl diphosphate.

Belongs to the FPP/GGPP synthase family. Mg(2+) serves as cofactor.

It catalyses the reaction isopentenyl diphosphate + dimethylallyl diphosphate = (2E)-geranyl diphosphate + diphosphate. The enzyme catalyses isopentenyl diphosphate + (2E)-geranyl diphosphate = (2E,6E)-farnesyl diphosphate + diphosphate. The catalysed reaction is isopentenyl diphosphate + (2E,6E)-farnesyl diphosphate = (2E,6E,10E)-geranylgeranyl diphosphate + diphosphate. The protein operates within secondary metabolite biosynthesis. Functionally, geranylgeranyl pyrophosphate synthase; part of the gene cluster that mediates the biosynthesis of paspalitrems, indole-diterpene (IDT) mycotoxins that are potent tremorgens in mammals. The geranylgeranyl diphosphate (GGPP) synthase idtG is proposed to catalyze the first step in IDT biosynthesis via catalysis of a series of iterative condensations of isopentenyl diphosphate (IPP) with dimethylallyl diphosphate (DMAPP), geranyl diphosphate (GPP), and farnesyl diphosphate (FPP), to form GGPP. Condensation of indole-3-glycerol phosphate with GGPP by the prenyltransferase idtC then forms 3-geranylgeranylindole (3-GGI). Epoxidation of the two terminal alkenes of the geranylgeranyl moiety by the FAD-dependent monooxygenase idtM, and cyclization by the terpene cyclase idtB then leads to the production of paspaline. The cytochrome P450 monooxygenase idtP then catalyzes oxidative elimination of the pendant methyl group at C-12 of paspaline and generates the C-10 ketone to yield 13-desoxypaxilline. The cytochrome P450 monooxygenase idtQ may catalyze the C-13 oxidation of 13-desoxypaxilline to afford paxilline. Considering that both paspalicine and paxilline were detected in C.paspali, idtQ also catalyzes the formation of paspalinine from 13-desoxypaxilline via paspalicine as an intermediate. Finally, the alpha-prenyltransferase idtF prenylates paspalinine at the C-20 or the C-21 positions to yield paspalitrems A and C, respectively. The hydroxylation of paspalitrem A at C-32 by a still unknown oxidase affords paspalitrem B. This is Geranylgeranyl pyrophosphate synthase idtG from Claviceps paspali (Rye ergot fungus).